Consider the following 469-residue polypeptide: 6-phosphofructo-2-kinase/fructose-2,6-bisphosphatase 4 (469 aa).

Residues 1–249 form a 6-phosphofructo-2-kinase region; sequence MASPRELTQN…YYLMNIHVTP (249 aa). Residue 46 to 54 participates in ATP binding; that stretch reads GLPARGKTY. Beta-D-fructose 6-phosphate contacts are provided by R79 and R103. D129 is a catalytic residue. The beta-D-fructose 6-phosphate site is built by T131 and R137. The active site involves C159. Residue 168–173 participates in ATP binding; sequence NIVQVK. Beta-D-fructose 6-phosphate is bound by residues K173, R194, and Y198. The segment at 250–469 is fructose-2,6-bisphosphatase; that stretch reads RSIYLCRHGE…EALVTVPAHQ (220 aa). A beta-D-fructose 2,6-bisphosphate-binding site is contributed by R256. The active-site Tele-phosphohistidine intermediate is H257. The beta-D-fructose 2,6-bisphosphate site is built by N263, G269, and R306. E326 acts as the Proton donor/acceptor in catalysis. 6 residues coordinate beta-D-fructose 2,6-bisphosphate: Y337, R351, K355, Y366, Q392, and R396. 348-351 is an ATP binding site; it reads FALR. Residues 392–396 and Y428 each bind ATP; that span reads QAVMR. Residue T444 is modified to Phosphothreonine; by PKC.

In the C-terminal section; belongs to the phosphoglycerate mutase family. In terms of assembly, homodimer.

The enzyme catalyses beta-D-fructose 2,6-bisphosphate + H2O = beta-D-fructose 6-phosphate + phosphate. The catalysed reaction is beta-D-fructose 6-phosphate + ATP = beta-D-fructose 2,6-bisphosphate + ADP + H(+). With respect to regulation, the most important regulatory mechanism of these opposing activities is by phosphorylation and dephosphorylation of the enzyme. In terms of biological role, synthesis and degradation of fructose 2,6-bisphosphate. The sequence is that of 6-phosphofructo-2-kinase/fructose-2,6-bisphosphatase 4 (PFKFB4) from Homo sapiens (Human).